The following is a 518-amino-acid chain: UPF0288 protein Mbar_A0706 (518 aa).

The protein belongs to the UPF0288 family.

This Methanosarcina barkeri (strain Fusaro / DSM 804) protein is UPF0288 protein Mbar_A0706.